We begin with the raw amino-acid sequence, 439 residues long: Protein translocase subunit SecY (439 aa).

The next 10 membrane-spanning stretches (helical) occupy residues 19–39 (ILFT…TVPG), 68–88 (YSLF…VQLL), 116–136 (YITL…FQAM), 151–171 (LMIG…GEQI), 176–196 (FGSG…PSAV), 216–236 (WLFV…TTFV), 269–289 (VIPV…LQFL), 312–332 (WTGM…YSFV), 373–393 (VGAL…NVWG), and 396–416 (KIVA…IQAV).

This sequence belongs to the SecY/SEC61-alpha family. Component of the Sec protein translocase complex. Heterotrimer consisting of SecY, SecE and SecG subunits. The heterotrimers can form oligomers, although 1 heterotrimer is thought to be able to translocate proteins. Interacts with the ribosome. Interacts with SecDF, and other proteins may be involved. Interacts with SecA.

Its subcellular location is the cell membrane. The central subunit of the protein translocation channel SecYEG. Consists of two halves formed by TMs 1-5 and 6-10. These two domains form a lateral gate at the front which open onto the bilayer between TMs 2 and 7, and are clamped together by SecE at the back. The channel is closed by both a pore ring composed of hydrophobic SecY resides and a short helix (helix 2A) on the extracellular side of the membrane which forms a plug. The plug probably moves laterally to allow the channel to open. The ring and the pore may move independently. The chain is Protein translocase subunit SecY from Lactococcus lactis subsp. lactis (strain IL1403) (Streptococcus lactis).